The following is an 80-amino-acid chain: uncharacterized protein (80 aa).

The next 3 membrane-spanning stretches (helical) occupy residues 2–22 (INLW…IGQV), 32–52 (FFGM…LTGG), and 55–75 (LVTG…RFMV).

It localises to the cell membrane. This is an uncharacterized protein from Escherichia coli (strain K12).